Reading from the N-terminus, the 266-residue chain is Respiratory nitrate reductase beta chain (266 aa).

4Fe-4S ferredoxin-type domains lie at valine 3 to asparagine 32 and tryptophan 30 to glutamate 61. The [4Fe-4S] cluster site is built by cysteine 12, cysteine 15, cysteine 18, cysteine 22, cysteine 39, cysteine 42, and cysteine 47. Positions 51 and 73 each coordinate [3Fe-4S] cluster. Residues cysteine 77, cysteine 81, cysteine 84, cysteine 96, and cysteine 100 each contribute to the [4Fe-4S] cluster site.

Heterotrimer composed of an alpha, a beta and a gamma chain. Alpha and beta are catalytic chains; gamma chains are involved in binding the enzyme complex to the cytoplasmic membrane. [4Fe-4S] cluster serves as cofactor. The cofactor is [3Fe-4S] cluster.

The protein resides in the cell membrane. It is found in the cytoplasm. The enzyme catalyses nitrate + a quinol = a quinone + nitrite + H2O. With respect to regulation, inhibited by micromolar concentrations of azide. Its function is as follows. The nitrate reductase enzyme complex allows Bradyrhizobium sp. USDA 3045 to use nitrate as an electron acceptor during anaerobic growth. The beta chain is an electron transfer unit containing four cysteine clusters involved in the formation of iron-sulfur centers. Electrons are transferred from the gamma chain to the molybdenum cofactor of the alpha subunit. The chain is Respiratory nitrate reductase beta chain (narH) from Bradyrhizobium sp.